Reading from the N-terminus, the 225-residue chain is Endonuclease V (225 aa).

Positions 43 and 110 each coordinate Mg(2+).

This sequence belongs to the endonuclease V family. Mg(2+) serves as cofactor.

The protein localises to the cytoplasm. It carries out the reaction Endonucleolytic cleavage at apurinic or apyrimidinic sites to products with a 5'-phosphate.. Its function is as follows. DNA repair enzyme involved in the repair of deaminated bases. Selectively cleaves double-stranded DNA at the second phosphodiester bond 3' to a deoxyinosine leaving behind the intact lesion on the nicked DNA. This is Endonuclease V from Thermotoga neapolitana (strain ATCC 49049 / DSM 4359 / NBRC 107923 / NS-E).